A 265-amino-acid chain; its full sequence is Undecaprenyl-diphosphatase (265 aa).

Helical transmembrane passes span 42 to 62 (ATTFEVAIQLGAILAVVVLYW), 82 to 102 (GIMLLLLTSLPASVLGLAAHS), 108 to 128 (LFTPSTVAIALAVGAIFMLLV), 143 to 163 (MSPALALGIGCFQCLALWPGF), 181 to 201 (GLAAEYSFIAAVPIMFAATGY), 221 to 241 (GFVVSFLSAWAAVKLFIALVG), and 248 to 264 (FAWYRLAIAPLVYYFMA).

This sequence belongs to the UppP family.

The protein localises to the cell inner membrane. The enzyme catalyses di-trans,octa-cis-undecaprenyl diphosphate + H2O = di-trans,octa-cis-undecaprenyl phosphate + phosphate + H(+). Its function is as follows. Catalyzes the dephosphorylation of undecaprenyl diphosphate (UPP). Confers resistance to bacitracin. The polypeptide is Undecaprenyl-diphosphatase (Nitratidesulfovibrio vulgaris (strain ATCC 29579 / DSM 644 / CCUG 34227 / NCIMB 8303 / VKM B-1760 / Hildenborough) (Desulfovibrio vulgaris)).